The following is a 236-amino-acid chain: Glucosamine-6-phosphate deaminase (236 aa).

The active-site Proton acceptor; for enolization step is the Asp-62. Residue Asn-128 is the For ring-opening step of the active site. His-130 acts as the Proton acceptor; for ring-opening step in catalysis. Glu-135 functions as the For ring-opening step in the catalytic mechanism.

It belongs to the glucosamine/galactosamine-6-phosphate isomerase family. NagB subfamily.

The catalysed reaction is alpha-D-glucosamine 6-phosphate + H2O = beta-D-fructose 6-phosphate + NH4(+). Its pathway is amino-sugar metabolism; N-acetylneuraminate degradation; D-fructose 6-phosphate from N-acetylneuraminate: step 5/5. Its function is as follows. Catalyzes the reversible isomerization-deamination of glucosamine 6-phosphate (GlcN6P) to form fructose 6-phosphate (Fru6P) and ammonium ion. The polypeptide is Glucosamine-6-phosphate deaminase (Oenococcus oeni (strain ATCC BAA-331 / PSU-1)).